Here is a 620-residue protein sequence, read N- to C-terminus: Translocator protein BipB (620 aa).

The interval 58-95 (QCDAQPAAHDARLDDKPALRAPQERDAPPLGASDTGSR) is disordered. The span at 66–84 (HDARLDDKPALRAPQERDA) shows a compositional bias: basic and acidic residues. A coiled-coil region spans residues 309–339 (EMQAKREAELQKKSDEYQAQVKKAEEMQKTM). 3 helical membrane passes run 355-375 (FAAAAFTGGASLALAAVGLAL), 401-421 (AILKPLMEMISSLITKALVAC), and 430-450 (LAGAILGAVVTGVALVAAAFV).

The protein belongs to the SctE/SipB/YopB family.

The protein localises to the secreted. It is found in the host membrane. Its function is as follows. Plays a role in the bacterium-induced formation of multinucleated giant cell (MNGC), which is formed after host cell fusion, as well as in the intercellular spreading of bacteria and in the induction of apoptosis in macrophages. May act in concert with other effector proteins to induce fusion of host cell membranes. The sequence is that of Translocator protein BipB (bipB) from Burkholderia pseudomallei (strain 1710b).